Consider the following 1220-residue polypeptide: Limbin (1220 aa).

Positions 1 to 29 are cleaved as a signal peptide; that stretch reads MGATGPTGAGGRATWVLAGNILAAALVLG. The Extracellular segment spans residues 30–210; the sequence is SGPRALPPSF…VLPNHGLHAA (181 aa). The disordered stretch occupies residues 38 to 59; it reads SFPALGPGSPSRPGPAGPWASS. Residues Asn100, Asn109, and Asn130 are each glycosylated (N-linked (GlcNAc...) asparagine). The helical transmembrane segment at 211 to 231 threads the bilayer; that stretch reads GFIAAFLISLLLTVAALFFLA. At 232 to 1220 the chain is on the cytoplasmic side; sequence RGRCLQGGML…KKANRALGLD (989 aa). Coiled coils occupy residues 355 to 404, 563 to 644, 854 to 875, and 920 to 1005; these read EEYE…SAAE, KQKL…AALD, GELL…AESL, and QILE…VREE.

In terms of assembly, component of the EvC complex composed of EFCAB7, IQCE, EVC2 and EVC; built from two subcomplexes, EVC2:EVC and EFCAB7:IQCE. Interacts with EVC. Interacts (via N-terminal end) with EFCAB7. Interacts (via N-terminal end) with IQCE. Expressed in long and cranial bones, kidney and heart. Strongly expressed in proliferating chondrocytes, osteoblasts and osteoclasts.

The protein resides in the cell membrane. It localises to the cytoplasm. The protein localises to the cytoskeleton. Its subcellular location is the cilium basal body. It is found in the cell projection. The protein resides in the cilium. It localises to the cilium membrane. The protein localises to the nucleus. Component of the EvC complex that positively regulates ciliary Hedgehog (Hh) signaling. Plays a critical role in bone formation and skeletal development. May be involved in early embryonic morphogenesis. This chain is Limbin (Evc2), found in Mus musculus (Mouse).